We begin with the raw amino-acid sequence, 61 residues long: LECHNQQSSQPPTTKTCPGETNCYKKVWRDHRGTIIERGCGCPTVKPGIKLNCCTTDKCNN.

4 disulfides stabilise this stretch: cysteine 3–cysteine 23, cysteine 17–cysteine 40, cysteine 42–cysteine 53, and cysteine 54–cysteine 59.

This sequence belongs to the three-finger toxin family. Short-chain subfamily. Type I alpha-neurotoxin sub-subfamily. As to expression, expressed by the venom gland.

The protein localises to the secreted. Its function is as follows. Binds with high affinity to muscular nicotinic acetylcholine receptors (nAChRs) (tested on Torpedo marmorata AChR, Kd=0.07 nM) and with low affinity to neuronal alpha-7/CHRNA7 nAChRs (tested on chimeric receptor, Kd=3 uM) and inhibit acetylcholine from binding to the receptor, thereby impairing neuromuscular transmission. Produces peripheral paralysis by blocking neuromuscular transmission at the postsynaptic site. The chain is Short neurotoxin 1 from Naja pallida (Red spitting cobra).